The sequence spans 53 residues: uncharacterized protein (53 aa).

The chain crosses the membrane as a helical span at residues 20-42 (ILFPVLLVFDTILIVVGIALILF).

The protein localises to the membrane. This is an uncharacterized protein from Archaeoglobus fulgidus (strain ATCC 49558 / DSM 4304 / JCM 9628 / NBRC 100126 / VC-16).